Reading from the N-terminus, the 568-residue chain is MFS-type efflux transporter phmH (568 aa).

Residues 1-11 show a composition bias toward polar residues; the sequence is MVSGTDTTEVG. A disordered region spans residues 1–39; the sequence is MVSGTDTTEVGATTKAPPSEGTEGILDDHSSNSQPQAEK. Helical transmembrane passes span 45 to 65, 101 to 121, 134 to 154, 161 to 181, 199 to 219, 237 to 257, and 268 to 288; these read YPLSFWLAFLGLCCTGLVSAL, YVMIGATIIFILGSGLCGGSS, GIGAGGINMLIDMIICDLVPM, IGLLFLFVSLGATIGPFVGGI, IFYINLPFGGVALLLLILFLH, VIGNSILIGATFAILYALTYG, and IAAPLTIGLVGLVAAFFWEMS. Residue Asn303 is glycosylated (N-linked (GlcNAc...) asparagine). A run of 6 helical transmembrane segments spans residues 307–327, 344–364, 372–392, 399–419, 437–457, and 515–535; these read AAAFFISFMCMLLAFWINFFY, VYTLPRAIAFPLFAAVGGAIV, TVHLVSTGIMPLVMGLSSILD, EWVIWQLLFGVSGGMMISTTL, TWSFVRSLGTIWGLSIPAAIF, and IGIVFGGVTFLSVFFEKEIHL. The N-linked (GlcNAc...) asparagine glycan is linked to Asn563.

The protein belongs to the major facilitator superfamily.

It localises to the cell membrane. In terms of biological role, MFS-type efflux transporter; part of the gene cluster that mediates the biosynthesis of thethe mycotoxins phomacins, leucine-derived cytochalasans with potent actin polymerization-inhibitory activities and monocot-specific antigerminative activities. PhmH might be involved in the excretion of phomacins. The sequence is that of MFS-type efflux transporter phmH from Phaeosphaeria nodorum (strain SN15 / ATCC MYA-4574 / FGSC 10173) (Glume blotch fungus).